Here is a 1005-residue protein sequence, read N- to C-terminus: Mitogen-activated protein kinase kinase kinase 10 (1005 aa).

One can recognise an SH3 domain in the interval V32 to K96. The Protein kinase domain maps to L118–I380. ATP contacts are provided by residues I124 to V132 and K145. D242 functions as the Proton acceptor in the catalytic mechanism. 2 leucine-zipper regions span residues I404–L425 and L439–I460. 4 disordered regions span residues S551–P611, Q647–R676, F712–S736, and R758–A940. Composition is skewed to basic and acidic residues over residues Q576 to T588 and S648 to A658. 2 stretches are compositionally biased toward basic and acidic residues: residues I761 to G786 and Y799 to K809. Polar residues predominate over residues Q810 to E826. Pro residues predominate over residues E862–P879. A compositionally biased stretch (low complexity) spans S915–A940.

The protein belongs to the protein kinase superfamily. STE Ser/Thr protein kinase family. MAP kinase kinase kinase subfamily. In terms of assembly, homodimer. Binds to the GTPase rac1 but not cdc42 or rhoA. Interacts (via kinase domain) with pak1 (via kinase domain). Interacts with the ubiquitin-conjugating enzyme ube2d4. Mg(2+) serves as cofactor. Autophosphorylation on serine and threonine residues within the activation loop plays a role in enzyme activation. In terms of processing, mono- and poly-ubiquitinated. In adults, strongly expressed in the brain and spleen with lower levels in pancreas, heart, muscle and kidney (at protein level). In the developing embryo, expressed at stage 22 in the cement gland. Weakly expressed in the pronephros from stage 24 or 25, with expression increasing in strength by stage 30 and continuing at least until stage 37. Expression in the developing pronephros correlates with epithelialization of the proximal pronephric tubules.

The enzyme catalyses L-seryl-[protein] + ATP = O-phospho-L-seryl-[protein] + ADP + H(+). It carries out the reaction L-threonyl-[protein] + ATP = O-phospho-L-threonyl-[protein] + ADP + H(+). Homodimerization via the leucine zipper domains is required for autophosphorylation and subsequent activation. In terms of biological role, activates the JUN N-terminal pathway. Essential for pronephros and cement gland development. The polypeptide is Mitogen-activated protein kinase kinase kinase 10 (map3k10) (Xenopus laevis (African clawed frog)).